A 145-amino-acid chain; its full sequence is Large ribosomal subunit protein uL13 (145 aa).

This sequence belongs to the universal ribosomal protein uL13 family. In terms of assembly, part of the 50S ribosomal subunit.

This protein is one of the early assembly proteins of the 50S ribosomal subunit, although it is not seen to bind rRNA by itself. It is important during the early stages of 50S assembly. The sequence is that of Large ribosomal subunit protein uL13 from Bacillus pumilus (strain SAFR-032).